Consider the following 179-residue polypeptide: ATP-dependent protease subunit HslV (179 aa).

Thr-6 is a catalytic residue. 3 residues coordinate Na(+): Ser-162, Cys-165, and Thr-168.

The protein belongs to the peptidase T1B family. HslV subfamily. In terms of assembly, a double ring-shaped homohexamer of HslV is capped on each side by a ring-shaped HslU homohexamer. The assembly of the HslU/HslV complex is dependent on binding of ATP.

It localises to the cytoplasm. It catalyses the reaction ATP-dependent cleavage of peptide bonds with broad specificity.. With respect to regulation, allosterically activated by HslU binding. Protease subunit of a proteasome-like degradation complex believed to be a general protein degrading machinery. The polypeptide is ATP-dependent protease subunit HslV (Maridesulfovibrio salexigens (strain ATCC 14822 / DSM 2638 / NCIMB 8403 / VKM B-1763) (Desulfovibrio salexigens)).